A 314-amino-acid chain; its full sequence is Ribonuclease Z (314 aa).

Residues histidine 61, histidine 63, aspartate 65, histidine 66, histidine 139, aspartate 211, and histidine 269 each contribute to the Zn(2+) site. Catalysis depends on aspartate 65, which acts as the Proton acceptor.

It belongs to the RNase Z family. In terms of assembly, homodimer. The cofactor is Zn(2+).

The enzyme catalyses Endonucleolytic cleavage of RNA, removing extra 3' nucleotides from tRNA precursor, generating 3' termini of tRNAs. A 3'-hydroxy group is left at the tRNA terminus and a 5'-phosphoryl group is left at the trailer molecule.. Functionally, zinc phosphodiesterase, which displays some tRNA 3'-processing endonuclease activity. Probably involved in tRNA maturation, by removing a 3'-trailer from precursor tRNA. This chain is Ribonuclease Z, found in Gemmatimonas aurantiaca (strain DSM 14586 / JCM 11422 / NBRC 100505 / T-27).